The primary structure comprises 61 residues: Large ribosomal subunit protein bL32c (61 aa).

Residues 37-61 form a disordered region; that stretch reads SRSFSSGNEHPKPKGFSGQQQQTNK.

It belongs to the bacterial ribosomal protein bL32 family.

The protein resides in the plastid. The protein localises to the chloroplast. This Agrostis stolonifera (Creeping bentgrass) protein is Large ribosomal subunit protein bL32c.